The following is a 605-amino-acid chain: Elongation factor 4 (605 aa).

A tr-type G domain is found at glycine 9–alanine 192. Residues aspartate 21–threonine 26 and asparagine 139–aspartate 142 each bind GTP.

The protein belongs to the TRAFAC class translation factor GTPase superfamily. Classic translation factor GTPase family. LepA subfamily.

Its subcellular location is the cell inner membrane. It catalyses the reaction GTP + H2O = GDP + phosphate + H(+). In terms of biological role, required for accurate and efficient protein synthesis under certain stress conditions. May act as a fidelity factor of the translation reaction, by catalyzing a one-codon backward translocation of tRNAs on improperly translocated ribosomes. Back-translocation proceeds from a post-translocation (POST) complex to a pre-translocation (PRE) complex, thus giving elongation factor G a second chance to translocate the tRNAs correctly. Binds to ribosomes in a GTP-dependent manner. The chain is Elongation factor 4 from Chlorobaculum tepidum (strain ATCC 49652 / DSM 12025 / NBRC 103806 / TLS) (Chlorobium tepidum).